A 456-amino-acid chain; its full sequence is Trigger factor (456 aa).

Residues 192–277 (GDTVVIDFVG…IHEVKTKEVP (86 aa)) form the PPIase FKBP-type domain.

Belongs to the FKBP-type PPIase family. Tig subfamily.

It localises to the cytoplasm. The enzyme catalyses [protein]-peptidylproline (omega=180) = [protein]-peptidylproline (omega=0). Its function is as follows. Involved in protein export. Acts as a chaperone by maintaining the newly synthesized protein in an open conformation. Functions as a peptidyl-prolyl cis-trans isomerase. The protein is Trigger factor of Streptococcus pyogenes serotype M2 (strain MGAS10270).